Consider the following 74-residue polypeptide: Protein SlyX homolog (74 aa).

This sequence belongs to the SlyX family.

The sequence is that of Protein SlyX homolog from Neisseria meningitidis serogroup C (strain 053442).